The chain runs to 202 residues: dITP/XTP pyrophosphatase (202 aa).

A substrate-binding site is contributed by 7–12; that stretch reads SRNEAK. Asp-68 acts as the Proton acceptor in catalysis. Position 68 (Asp-68) interacts with Mg(2+). Residues Ser-69, 156-159, Lys-179, and 184-185 each bind substrate; these read FGYD and HR.

The protein belongs to the HAM1 NTPase family. Homodimer. It depends on Mg(2+) as a cofactor.

It catalyses the reaction XTP + H2O = XMP + diphosphate + H(+). It carries out the reaction dITP + H2O = dIMP + diphosphate + H(+). The enzyme catalyses ITP + H2O = IMP + diphosphate + H(+). In terms of biological role, pyrophosphatase that catalyzes the hydrolysis of nucleoside triphosphates to their monophosphate derivatives, with a high preference for the non-canonical purine nucleotides XTP (xanthosine triphosphate), dITP (deoxyinosine triphosphate) and ITP. Seems to function as a house-cleaning enzyme that removes non-canonical purine nucleotides from the nucleotide pool, thus preventing their incorporation into DNA/RNA and avoiding chromosomal lesions. This Frankia alni (strain DSM 45986 / CECT 9034 / ACN14a) protein is dITP/XTP pyrophosphatase.